The sequence spans 565 residues: Sodium/hydrogen exchanger 9B1 (565 aa).

Composition is skewed to basic and acidic residues over residues 1–14 (MSEH…KDDG) and 23–86 (MSKD…ETQT). The interval 1 to 112 (MSEHDVESNK…RGTNSYCPPQ (112 aa)) is disordered. Helical transmembrane passes span 122–142 (GAAL…EVLP), 146–166 (LFGL…LEFI), 167–187 (KIPV…GFTI), 206–223 (ALRN…GLGL), 238–258 (LSFG…HFIM), 266–286 (FLLG…NMLM), 311–331 (IVAI…GSVI), 341–361 (VLIG…FPSG), 371–391 (AFLV…IGLH), 419–439 (IVAN…GTEV), 449–469 (IGMC…STFV), 482–502 (VFIA…GPLA), and 523–543 (VAFL…GILG).

This sequence belongs to the monovalent cation:proton antiporter 1 (CPA1) transporter (TC 2.A.36) family. In terms of tissue distribution, testis-specific. Expressed in the spermatids and spermatozoa (at protein level). Specifically present in the principal piece of sperm tail (at protein level).

It localises to the cell projection. Its subcellular location is the cilium. The protein resides in the flagellum membrane. Its function is as follows. Sperm-specific Na(+)/H(+) exchanger involved in intracellular pH regulation of spermatozoa. Involved in sperm motility and fertility. This chain is Sodium/hydrogen exchanger 9B1, found in Mus musculus (Mouse).